Reading from the N-terminus, the 141-residue chain is Nucleoside diphosphate kinase (141 aa).

Positions 11, 59, 87, 93, 104, and 114 each coordinate ATP. H117 (pros-phosphohistidine intermediate) is an active-site residue.

It belongs to the NDK family. Homotetramer. It depends on Mg(2+) as a cofactor.

It is found in the cytoplasm. It catalyses the reaction a 2'-deoxyribonucleoside 5'-diphosphate + ATP = a 2'-deoxyribonucleoside 5'-triphosphate + ADP. It carries out the reaction a ribonucleoside 5'-diphosphate + ATP = a ribonucleoside 5'-triphosphate + ADP. In terms of biological role, major role in the synthesis of nucleoside triphosphates other than ATP. The ATP gamma phosphate is transferred to the NDP beta phosphate via a ping-pong mechanism, using a phosphorylated active-site intermediate. The chain is Nucleoside diphosphate kinase from Nitrosomonas europaea (strain ATCC 19718 / CIP 103999 / KCTC 2705 / NBRC 14298).